Consider the following 268-residue polypeptide: Interleukin-1 beta (268 aa).

Residues 1–116 constitute a propeptide that is removed on maturation; that stretch reads MATVPELNCE…WDDDDLLVCD (116 aa).

This sequence belongs to the IL-1 family. As to quaternary structure, monomer. In its precursor form, weakly interacts with full-length MEFV; the mature cytokine does not interact at all. Interacts with integrins ITGAV:ITGBV and ITGA5:ITGB1; integrin-binding is required for IL1B signaling. Interacts with cargo receptor TMED10; the interaction is direct and is required for the secretion of IL1B mature form. Interacts with HSP90AB1; the interaction facilitates cargo translocation into the ERGIC. Interacts with HSP90B1; the interaction facilitates cargo translocation into the ERGIC.

The protein localises to the cytoplasm. Its subcellular location is the cytosol. It is found in the secreted. The protein resides in the lysosome. It localises to the extracellular exosome. Its function is as follows. Potent pro-inflammatory cytokine. Initially discovered as the major endogenous pyrogen, induces prostaglandin synthesis, neutrophil influx and activation, T-cell activation and cytokine production, B-cell activation and antibody production, and fibroblast proliferation and collagen production. Promotes Th17 differentiation of T-cells. Synergizes with IL12/interleukin-12 to induce IFNG synthesis from T-helper 1 (Th1) cells. Plays a role in angiogenesis by inducing VEGF production synergistically with TNF and IL6. Involved in transduction of inflammation downstream of pyroptosis: its mature form is specifically released in the extracellular milieu by passing through the gasdermin-D (GSDMD) pore. This Rattus norvegicus (Rat) protein is Interleukin-1 beta.